Here is a 538-residue protein sequence, read N- to C-terminus: Sucrose transport protein SUT1 (538 aa).

The Cytoplasmic portion of the chain corresponds to Met1 to Arg52. A helical transmembrane segment spans residues Leu53 to Leu73. The Extracellular segment spans residues Leu74–Leu81. The helical transmembrane segment at Gly82 to Val102 threads the bilayer. Residues Gln103–Tyr123 lie on the Cytoplasmic side of the membrane. Residues Ile124 to Ile144 form a helical membrane-spanning segment. Topologically, residues Gly145–Arg162 are extracellular. Residues Trp163–Val183 form a helical membrane-spanning segment. Residues Gln184–His198 are Cytoplasmic-facing. Residues Gly199 to Tyr219 form a helical membrane-spanning segment. Over Ser220–Lys247 the chain is Extracellular. A helical membrane pass occupies residues Gly248–Ala268. Topologically, residues Lys269–Thr306 are cytoplasmic. Residues Gly307–Leu327 form a helical membrane-spanning segment. At Tyr328–Arg357 the chain is on the extracellular side. Residues Ala358–Glu378 form a helical membrane-spanning segment. The Cytoplasmic portion of the chain corresponds to Pro379–Val388. Residues Val389 to Phe409 form a helical membrane-spanning segment. The Extracellular segment spans residues Trp410–Cys433. Residues Leu434–Val454 traverse the membrane as a helical segment. The Cytoplasmic segment spans residues Thr455–Thr470. The chain crosses the membrane as a helical span at residues Gly471–Trp491. The Extracellular portion of the chain corresponds to Asp492–Asn499. A helical membrane pass occupies residues Ile500–Leu520. Residues Leu521–His538 are Cytoplasmic-facing.

This sequence belongs to the glycoside-pentoside-hexuronide (GPH) cation symporter transporter (TC 2.A.2.4) family. In terms of assembly, homodimer.

The protein localises to the cell membrane. It functions in the pathway glycan biosynthesis; sucrose metabolism. Its function is as follows. Responsible for the transport of sucrose into the cell, with the concomitant uptake of protons (symport system). May also transport other glucosides. May be required for apoplastic phloem sucrose loading in source tissues (e.g. leaves) in order to transport it to sink tissues (e.g. roots, flowers). The polypeptide is Sucrose transport protein SUT1 (SUT1) (Oryza sativa subsp. indica (Rice)).